A 198-amino-acid polypeptide reads, in one-letter code: Golgi to ER traffic protein 1 (198 aa).

At 1–6 the chain is on the lumenal side; the sequence is MDPFSI. A helical transmembrane segment spans residues 7-26; that stretch reads LLTLTLIILAQNAVRIVGKS. At 27-110 the chain is on the cytoplasmic side; sequence QIHQSIWNLY…AIEKYLGLAI (84 aa). Residues 73-106 adopt a coiled-coil conformation; it reads KWTKLNRKYDQLQTEIKAVSDQVSQQQQAIEKYL. Residues 111–131 form a helical membrane-spanning segment; sequence SVTTTLPLWLFRFKYRKQPLF. Residues 132 to 155 lie on the Lumenal side of the membrane; the sequence is YFPKDTFPSYLEWILSFPSVPQGS. A helical transmembrane segment spans residues 156-172; sequence IGIMFWILLLNKFVSNL. The Cytoplasmic portion of the chain corresponds to 173–198; that stretch reads EFIVKTFSTKVEKPVPIVKVEDLSPK.

It belongs to the WRB/GET1 family. As to quaternary structure, component of the Golgi to ER traffic (GET) complex, which is composed of GET1, GET2 and GET3. Within the complex, GET1 and GET2 form a heterotetramer which is stabilized by phosphatidylinositol binding and which binds to the GET3 homodimer.

It localises to the endoplasmic reticulum membrane. It is found in the golgi apparatus membrane. Its function is as follows. Required for the post-translational delivery of tail-anchored (TA) proteins to the endoplasmic reticulum. Together with GET2, acts as a membrane receptor for soluble GET3, which recognizes and selectively binds the transmembrane domain of TA proteins in the cytosol. The GET complex cooperates with the HDEL receptor ERD2 to mediate the ATP-dependent retrieval of resident ER proteins that contain a C-terminal H-D-E-L retention signal from the Golgi to the ER. This chain is Golgi to ER traffic protein 1, found in Komagataella phaffii (strain GS115 / ATCC 20864) (Yeast).